A 212-amino-acid chain; its full sequence is Ribosomal RNA small subunit methyltransferase G (212 aa).

Residues Gly-73, Ile-127–Glu-128, and Arg-143 contribute to the S-adenosyl-L-methionine site.

The protein belongs to the methyltransferase superfamily. RNA methyltransferase RsmG family.

It localises to the cytoplasm. It carries out the reaction guanosine(527) in 16S rRNA + S-adenosyl-L-methionine = N(7)-methylguanosine(527) in 16S rRNA + S-adenosyl-L-homocysteine. In terms of biological role, specifically methylates the N7 position of guanine in position 527 of 16S rRNA. The sequence is that of Ribosomal RNA small subunit methyltransferase G from Methylobacterium nodulans (strain LMG 21967 / CNCM I-2342 / ORS 2060).